The chain runs to 221 residues: Small ribosomal subunit protein uS5 (221 aa).

An S5 DRBM domain is found at 46 to 109; the sequence is LKDEVIDIKR…INAKLNIMEI (64 aa).

Belongs to the universal ribosomal protein uS5 family. As to quaternary structure, part of the 30S ribosomal subunit. Contacts protein S4.

Its function is as follows. With S4 and S12 plays an important role in translational accuracy. The sequence is that of Small ribosomal subunit protein uS5 from Thermoplasma acidophilum (strain ATCC 25905 / DSM 1728 / JCM 9062 / NBRC 15155 / AMRC-C165).